We begin with the raw amino-acid sequence, 150 residues long: Large ribosomal subunit protein bL9 (150 aa).

Belongs to the bacterial ribosomal protein bL9 family.

Functionally, binds to the 23S rRNA. The polypeptide is Large ribosomal subunit protein bL9 (Photorhabdus laumondii subsp. laumondii (strain DSM 15139 / CIP 105565 / TT01) (Photorhabdus luminescens subsp. laumondii)).